The primary structure comprises 670 residues: Catalase (670 aa).

Active-site residues include histidine 61 and asparagine 132. Tyrosine 345 lines the heme pocket.

It belongs to the catalase family. In terms of assembly, homotetramer. Heme serves as cofactor.

It localises to the peroxisome matrix. It catalyses the reaction 2 H2O2 = O2 + 2 H2O. Catalyzes the degradation of hydrogen peroxide (H(2)O(2)) generated by peroxisomal oxidases to water and oxygen, thereby protecting cells from the toxic effects of hydrogen peroxide. The sequence is that of Catalase from Penicillium janthinellum (Penicillium vitale).